The chain runs to 264 residues: Tritrans,polycis-undecaprenyl-diphosphate synthase (geranylgeranyl-diphosphate specific) (264 aa).

The active site involves Asp-43. Asp-43 contributes to the Mg(2+) binding site. Residues 44-47 (GNRR), Trp-48, His-60, and 88-90 (STE) each bind substrate. Asn-91 (proton acceptor) is an active-site residue. Substrate contacts are provided by residues Phe-92, Arg-94, Arg-213, and 219 to 221 (RIS). Glu-232 serves as a coordination point for Mg(2+).

Belongs to the UPP synthase family. As to quaternary structure, homodimer. It depends on Mg(2+) as a cofactor.

The enzyme catalyses geranylgeranyl diphosphate + 7 isopentenyl diphosphate = tri-trans,hepta-cis-undecaprenyl diphosphate + 7 diphosphate. Its function is as follows. Catalyzes the sequential condensation of isopentenyl diphosphate (IPP) with geranylgeranyl diphosphate (GGPP) to yield (2Z,6Z,10Z,14Z,18Z,22Z,26Z,30E,34E,38E)-undecaprenyl diphosphate (tritrans,heptacis-UPP). It is probably the precursor of glycosyl carrier lipids. The polypeptide is Tritrans,polycis-undecaprenyl-diphosphate synthase (geranylgeranyl-diphosphate specific) (Pyrococcus horikoshii (strain ATCC 700860 / DSM 12428 / JCM 9974 / NBRC 100139 / OT-3)).